Reading from the N-terminus, the 1382-residue chain is DNA-directed RNA polymerase subunit beta' (1382 aa).

Zn(2+) contacts are provided by Cys-70, Cys-72, Cys-85, and Cys-88. Residues Asp-460, Asp-462, and Asp-464 each contribute to the Mg(2+) site. Residues Cys-808, Cys-882, Cys-889, and Cys-892 each coordinate Zn(2+).

It belongs to the RNA polymerase beta' chain family. In terms of assembly, the RNAP catalytic core consists of 2 alpha, 1 beta, 1 beta' and 1 omega subunit. When a sigma factor is associated with the core the holoenzyme is formed, which can initiate transcription. Mg(2+) is required as a cofactor. The cofactor is Zn(2+).

The enzyme catalyses RNA(n) + a ribonucleoside 5'-triphosphate = RNA(n+1) + diphosphate. In terms of biological role, DNA-dependent RNA polymerase catalyzes the transcription of DNA into RNA using the four ribonucleoside triphosphates as substrates. The polypeptide is DNA-directed RNA polymerase subunit beta' (Citrifermentans bemidjiense (strain ATCC BAA-1014 / DSM 16622 / JCM 12645 / Bem) (Geobacter bemidjiensis)).